A 404-amino-acid polypeptide reads, in one-letter code: AT-hook motif nuclear-localized protein 6 (404 aa).

Residues Thr-40–Ser-112 are disordered. The span at Pro-45–Ala-55 shows a compositional bias: pro residues. Over residues Pro-56 to Thr-70 the composition is skewed to low complexity. Positions Lys-76–Lys-84 match the Bipartite nuclear localization signal motif. The segment at residues Lys-76–Asp-88 is a DNA-binding region (a.T hook). Positions Pro-98–Ser-112 are enriched in low complexity. The 143-residue stretch at Gly-157 to Gln-299 folds into the PPC domain. The segment at Ala-365–Gly-404 is disordered. A compositionally biased stretch (acidic residues) spans His-382–Ser-394.

The protein localises to the nucleus. Functionally, transcription factor that specifically binds AT-rich DNA sequences related to the nuclear matrix attachment regions (MARs). In Arabidopsis thaliana (Mouse-ear cress), this protein is AT-hook motif nuclear-localized protein 6.